Reading from the N-terminus, the 66-residue chain is Large ribosomal subunit protein bL32 (66 aa).

This sequence belongs to the bacterial ribosomal protein bL32 family.

The sequence is that of Large ribosomal subunit protein bL32 from Acetivibrio thermocellus (strain ATCC 27405 / DSM 1237 / JCM 9322 / NBRC 103400 / NCIMB 10682 / NRRL B-4536 / VPI 7372) (Clostridium thermocellum).